Reading from the N-terminus, the 508-residue chain is NAD(P)H-quinone oxidoreductase subunit 2 B, chloroplastic (508 aa).

The next 13 membrane-spanning stretches (helical) occupy residues 24 to 44 (LLLFDGSLIFPECILIFGLIL), 59 to 79 (WLYFISSTSLVMSITALLFRW), 99 to 119 (IFQFLILLCSTLCIPLSVEYI), 124 to 144 (MAITEFLLFVLTATLGGMFLC), 149 to 169 (FITIFVAPECFSLCSYLLSGY), 184 to 204 (LLMGGASSSILVHGFSWLYGL), 227 to 247 (PGISIALIFITVGIGFKLSPA), 295 to 315 (WHLLLEILAILSMILGNLIAI), 323 to 343 (MLAYSSIGQIGYVIIGIIVGD), 354 to 374 (YMLFYISMNLGAFACIVLFGL), 395 to 415 (ALSLALCLLSLGGLPPLAGFF), 418 to 438 (LYLFWCGWQAGLYFLVFIGLL), and 482 to 502 (MIVCVIASTIPGISMNPIIAI).

Belongs to the complex I subunit 2 family. In terms of assembly, NDH is composed of at least 16 different subunits, 5 of which are encoded in the nucleus.

It is found in the plastid. The protein resides in the chloroplast thylakoid membrane. It carries out the reaction a plastoquinone + NADH + (n+1) H(+)(in) = a plastoquinol + NAD(+) + n H(+)(out). The enzyme catalyses a plastoquinone + NADPH + (n+1) H(+)(in) = a plastoquinol + NADP(+) + n H(+)(out). In terms of biological role, NDH shuttles electrons from NAD(P)H:plastoquinone, via FMN and iron-sulfur (Fe-S) centers, to quinones in the photosynthetic chain and possibly in a chloroplast respiratory chain. The immediate electron acceptor for the enzyme in this species is believed to be plastoquinone. Couples the redox reaction to proton translocation, and thus conserves the redox energy in a proton gradient. In Ipomoea purpurea (Common morning glory), this protein is NAD(P)H-quinone oxidoreductase subunit 2 B, chloroplastic.